Here is a 293-residue protein sequence, read N- to C-terminus: Pantothenate synthetase (293 aa).

30–37 serves as a coordination point for ATP; the sequence is MGYLHKGH. Histidine 37 (proton donor) is an active-site residue. Residue glutamine 61 coordinates (R)-pantoate. Beta-alanine is bound at residue glutamine 61. 147–150 is an ATP binding site; the sequence is GEKD. Glutamine 153 serves as a coordination point for (R)-pantoate. ATP-binding positions include valine 176 and 184-187; that span reads CSSR.

This sequence belongs to the pantothenate synthetase family. As to quaternary structure, homodimer.

The protein localises to the cytoplasm. The catalysed reaction is (R)-pantoate + beta-alanine + ATP = (R)-pantothenate + AMP + diphosphate + H(+). It functions in the pathway cofactor biosynthesis; (R)-pantothenate biosynthesis; (R)-pantothenate from (R)-pantoate and beta-alanine: step 1/1. Catalyzes the condensation of pantoate with beta-alanine in an ATP-dependent reaction via a pantoyl-adenylate intermediate. The chain is Pantothenate synthetase from Brucella abortus (strain S19).